The following is a 525-amino-acid chain: Probable protein kinase UbiB (525 aa).

Residues 118–500 (DFERVPVASA…QKRTNRLLQG (383 aa)) form the Protein kinase domain. Residues 124–132 (VASASIAQV) and Lys150 each bind ATP. Asp285 acts as the Proton acceptor in catalysis. The chain crosses the membrane as a helical span at residues 501 to 521 (LLLFGVAVGVGAVLARAFLAL).

This sequence belongs to the ABC1 family. UbiB subfamily.

It localises to the cell inner membrane. Its pathway is cofactor biosynthesis; ubiquinone biosynthesis [regulation]. Its function is as follows. Is probably a protein kinase regulator of UbiI activity which is involved in aerobic coenzyme Q (ubiquinone) biosynthesis. This chain is Probable protein kinase UbiB, found in Paraburkholderia phytofirmans (strain DSM 17436 / LMG 22146 / PsJN) (Burkholderia phytofirmans).